Consider the following 156-residue polypeptide: Transcription elongation factor GreA (156 aa).

The stretch at 46-67 (AEYHAAREKQSFIEGRIKELEA) forms a coiled coil.

Belongs to the GreA/GreB family.

Functionally, necessary for efficient RNA polymerase transcription elongation past template-encoded arresting sites. The arresting sites in DNA have the property of trapping a certain fraction of elongating RNA polymerases that pass through, resulting in locked ternary complexes. Cleavage of the nascent transcript by cleavage factors such as GreA or GreB allows the resumption of elongation from the new 3'terminus. GreA releases sequences of 2 to 3 nucleotides. This chain is Transcription elongation factor GreA, found in Cereibacter sphaeroides (strain ATCC 17029 / ATH 2.4.9) (Rhodobacter sphaeroides).